The sequence spans 505 residues: Ent-kaurene oxidase 2 (505 aa).

The helical transmembrane segment at 3–23 (AFVPGGAGAAAAAVGGFVAAA) threads the bilayer. Cysteine 449 is a heme binding site.

Belongs to the cytochrome P450 family. Requires heme as cofactor. Widely expressed.

It is found in the membrane. It catalyses the reaction ent-kaur-16-ene + 3 reduced [NADPH--hemoprotein reductase] + 3 O2 = ent-kaur-16-en-19-oate + 3 oxidized [NADPH--hemoprotein reductase] + 4 H2O + 4 H(+). Its pathway is plant hormone biosynthesis; gibberellin biosynthesis. Catalyzes three successive oxidations of the 4-methyl group of ent-kaurene giving kaurenoic acid, a key step in gibberellins (GAs) biosynthesis. GAs, which are involved many processes, including stem elongation, play a central role in plant development. This is Ent-kaurene oxidase 2 from Oryza sativa subsp. japonica (Rice).